A 181-amino-acid chain; its full sequence is Protein Abitram (181 aa).

Belongs to the ABITRAM family. As to quaternary structure, interacts with F-actin. Interacts with G-actin.

It is found in the nucleus speckle. It localises to the cell projection. The protein resides in the lamellipodium. Its subcellular location is the nucleus. The protein localises to the growth cone. It is found in the dendrite. Actin-binding protein that regulates actin polymerization, filopodia dynamics and increases the branching of proximal dendrites of developing neurons. This is Protein Abitram from Homo sapiens (Human).